The primary structure comprises 75 residues: MLIPHDQLEVDTLTRLIEDFVTREGTDNGDETPLETRVLRVRQALTKGQAVIVFDPDSEQCQLMLKHDVPKELFD.

The protein belongs to the UPF0270 family.

This Pseudomonas fluorescens (strain ATCC BAA-477 / NRRL B-23932 / Pf-5) protein is UPF0270 protein PFL_4336.